A 253-amino-acid polypeptide reads, in one-letter code: Triosephosphate isomerase (253 aa).

A substrate-binding site is contributed by 15–17; the sequence is NWK. The active-site Electrophile is the H101. E171 (proton acceptor) is an active-site residue. Substrate contacts are provided by residues G177, S216, and 237–238; that span reads GG.

Belongs to the triosephosphate isomerase family. As to quaternary structure, homodimer.

It localises to the cytoplasm. It catalyses the reaction D-glyceraldehyde 3-phosphate = dihydroxyacetone phosphate. It participates in carbohydrate biosynthesis; gluconeogenesis. Its pathway is carbohydrate degradation; glycolysis; D-glyceraldehyde 3-phosphate from glycerone phosphate: step 1/1. Functionally, involved in the gluconeogenesis. Catalyzes stereospecifically the conversion of dihydroxyacetone phosphate (DHAP) to D-glyceraldehyde-3-phosphate (G3P). The polypeptide is Triosephosphate isomerase (Caulobacter vibrioides (strain ATCC 19089 / CIP 103742 / CB 15) (Caulobacter crescentus)).